A 200-amino-acid polypeptide reads, in one-letter code: Protein GrpE (200 aa).

Residues 15 to 47 form a disordered region; the sequence is DLEMDLNEEELEESEVNEDKEFEELDKSEEENE. A compositionally biased stretch (acidic residues) spans 16–47; sequence LEMDLNEEELEESEVNEDKEFEELDKSEEENE.

Belongs to the GrpE family. In terms of assembly, homodimer.

It is found in the cytoplasm. Participates actively in the response to hyperosmotic and heat shock by preventing the aggregation of stress-denatured proteins, in association with DnaK and GrpE. It is the nucleotide exchange factor for DnaK and may function as a thermosensor. Unfolded proteins bind initially to DnaJ; upon interaction with the DnaJ-bound protein, DnaK hydrolyzes its bound ATP, resulting in the formation of a stable complex. GrpE releases ADP from DnaK; ATP binding to DnaK triggers the release of the substrate protein, thus completing the reaction cycle. Several rounds of ATP-dependent interactions between DnaJ, DnaK and GrpE are required for fully efficient folding. The sequence is that of Protein GrpE from Clostridium tetani (strain Massachusetts / E88).